The primary structure comprises 400 residues: Enoyl-[acyl-carrier-protein] reductase [NADH] 1 (400 aa).

NAD(+)-binding positions include 48-53 (GSSSGY), 74-75 (FE), 111-112 (DA), and 139-140 (LA). Substrate is bound at residue Tyr-225. The active-site Proton donor is the Tyr-235. NAD(+) is bound by residues Lys-244 and 273–275 (VVT).

The protein belongs to the TER reductase family. Monomer.

It carries out the reaction a 2,3-saturated acyl-[ACP] + NAD(+) = a (2E)-enoyl-[ACP] + NADH + H(+). It participates in lipid metabolism; fatty acid biosynthesis. Functionally, involved in the final reduction of the elongation cycle of fatty acid synthesis (FAS II). Catalyzes the reduction of a carbon-carbon double bond in an enoyl moiety that is covalently linked to an acyl carrier protein (ACP). The sequence is that of Enoyl-[acyl-carrier-protein] reductase [NADH] 1 from Photobacterium profundum (strain SS9).